The chain runs to 118 residues: Protein MT2260 (118 aa).

The protein belongs to the HesB/IscA family.

The sequence is that of Protein MT2260 from Mycobacterium tuberculosis (strain CDC 1551 / Oshkosh).